Here is a 133-residue protein sequence, read N- to C-terminus: Profilin-4 (133 aa).

Residues Cys13 and Cys117 are joined by a disulfide bond. An Involved in PIP2 interaction motif is present at residues 83–99 (AVIRGKKGSGGITIKKT). Thr113 is modified (phosphothreonine).

It belongs to the profilin family. Occurs in many kinds of cells as a complex with monomeric actin in a 1:1 ratio. In terms of processing, phosphorylated by MAP kinases.

It localises to the cytoplasm. The protein localises to the cytoskeleton. Binds to actin and affects the structure of the cytoskeleton. At high concentrations, profilin prevents the polymerization of actin, whereas it enhances it at low concentrations. The chain is Profilin-4 from Corylus avellana (European hazel).